We begin with the raw amino-acid sequence, 491 residues long: Aspartyl/glutamyl-tRNA(Asn/Gln) amidotransferase subunit B (491 aa).

It belongs to the GatB/GatE family. GatB subfamily. Heterotrimer of A, B and C subunits.

The enzyme catalyses L-glutamyl-tRNA(Gln) + L-glutamine + ATP + H2O = L-glutaminyl-tRNA(Gln) + L-glutamate + ADP + phosphate + H(+). It catalyses the reaction L-aspartyl-tRNA(Asn) + L-glutamine + ATP + H2O = L-asparaginyl-tRNA(Asn) + L-glutamate + ADP + phosphate + 2 H(+). In terms of biological role, allows the formation of correctly charged Asn-tRNA(Asn) or Gln-tRNA(Gln) through the transamidation of misacylated Asp-tRNA(Asn) or Glu-tRNA(Gln) in organisms which lack either or both of asparaginyl-tRNA or glutaminyl-tRNA synthetases. The reaction takes place in the presence of glutamine and ATP through an activated phospho-Asp-tRNA(Asn) or phospho-Glu-tRNA(Gln). In Burkholderia lata (strain ATCC 17760 / DSM 23089 / LMG 22485 / NCIMB 9086 / R18194 / 383), this protein is Aspartyl/glutamyl-tRNA(Asn/Gln) amidotransferase subunit B.